Consider the following 256-residue polypeptide: Indole-3-glycerol phosphate synthase (256 aa).

This sequence belongs to the TrpC family.

The catalysed reaction is 1-(2-carboxyphenylamino)-1-deoxy-D-ribulose 5-phosphate + H(+) = (1S,2R)-1-C-(indol-3-yl)glycerol 3-phosphate + CO2 + H2O. The protein operates within amino-acid biosynthesis; L-tryptophan biosynthesis; L-tryptophan from chorismate: step 4/5. The chain is Indole-3-glycerol phosphate synthase from Chlorobaculum tepidum (strain ATCC 49652 / DSM 12025 / NBRC 103806 / TLS) (Chlorobium tepidum).